The chain runs to 440 residues: Probable secretory pathway GDP dissociation inhibitor 1 (440 aa).

It belongs to the Rab GDI family.

The polypeptide is Probable secretory pathway GDP dissociation inhibitor 1 (gdi1) (Schizosaccharomyces pombe (strain 972 / ATCC 24843) (Fission yeast)).